The primary structure comprises 711 residues: L-type lectin-domain containing receptor kinase VIII.2 (711 aa).

The first 30 residues, 1–30 (MLKLPPRFFSVYSTLIHILASFLCSSDVRG), serve as a signal peptide directing secretion. Residues 31 to 315 (DFPATRFDLG…NKLCKKSPAA (285 aa)) are Extracellular-facing. A legume-lectin like region spans residues 35-260 (TRFDLGTLTL…IHSVDWWSFS (226 aa)). Residue Asn57 is glycosylated (N-linked (GlcNAc...) asparagine). The segment at 265-306 (ESSESPPPMPNSPPPSSPSSSITPSLSTVRRKTADPSSSCRN) is disordered. Over residues 269 to 281 (SPPPMPNSPPPSS) the composition is skewed to pro residues. Over residues 282–291 (PSSSITPSLS) the composition is skewed to low complexity. Residues 316–336 (VAGVVTAGAFFLALFAGVIIW) form a helical membrane-spanning segment. The Cytoplasmic portion of the chain corresponds to 337 to 711 (VYSKKIKYTR…IFIVGKDRSV (375 aa)). The Protein kinase domain maps to 374–656 (FSSSRVIGNG…LVGEADVPEV (283 aa)). ATP-binding positions include 380 to 388 (IGNGAFGTV) and Lys403. Asp497 functions as the Proton acceptor in the catalytic mechanism.

In the C-terminal section; belongs to the protein kinase superfamily. Ser/Thr protein kinase family. It in the N-terminal section; belongs to the leguminous lectin family.

The protein resides in the cell membrane. It catalyses the reaction L-seryl-[protein] + ATP = O-phospho-L-seryl-[protein] + ADP + H(+). It carries out the reaction L-threonyl-[protein] + ATP = O-phospho-L-threonyl-[protein] + ADP + H(+). Involved in resistance response to the pathogenic oomycetes Phytophthora infestans and Phytophthora capsici. This is L-type lectin-domain containing receptor kinase VIII.2 from Arabidopsis thaliana (Mouse-ear cress).